The primary structure comprises 199 residues: NAD(P)H dehydrogenase (quinone) (199 aa).

Positions 4 to 190 (VLVLYYSAYG…AGARYQGRVI (187 aa)) constitute a Flavodoxin-like domain. FMN-binding positions include 10 to 15 (SAYGHI) and 78 to 80 (TRF). Tyrosine 12 contacts NAD(+). Tryptophan 98 contributes to the substrate binding site. Residues 113 to 119 (STATQHG) and histidine 134 contribute to the FMN site.

The protein belongs to the WrbA family. FMN is required as a cofactor.

It carries out the reaction a quinone + NADH + H(+) = a quinol + NAD(+). It catalyses the reaction a quinone + NADPH + H(+) = a quinol + NADP(+). This chain is NAD(P)H dehydrogenase (quinone), found in Bradyrhizobium sp. (strain BTAi1 / ATCC BAA-1182).